Here is a 323-residue protein sequence, read N- to C-terminus: Down-regulator of invasive growth 2 (323 aa).

Residues 1 to 10 (MNKEEQEDPQ) are compositionally biased toward acidic residues. Residues 1–26 (MNKEEQEDPQQEQISTVQENDPRNLQ) are disordered. Positions 11–26 (QEQISTVQENDPRNLQ) are enriched in polar residues. Ser-34 carries the phosphoserine modification. The disordered stretch occupies residues 67–87 (LSQKEEDHSGKPPTITTSPAE). Ser-225, Ser-266, and Ser-270 each carry phosphoserine.

As to quaternary structure, forms a complex with DIG1, STE12 and either FUS3 or KSS1. The interaction of FUS3 with STE12 depends on the presence of both DIG1 and DIG2. STE12 is lost from FUS3/DIG1/DIG2 complex after pheromone treatment. DIG1 and DIG2 have also been reported to interact with CLN1 and CLN2. Post-translationally, phosphorylated by FUS3 and KSS1, in a pheromone-stimulated manner.

The protein localises to the nucleus. In terms of biological role, DIG2 and DIG1 are negative regulators of the filamentation and pheromone induced mating program. DIG1 and DIG2 inhibit the transcriptional activity of STE12 by direct protein-protein interaction. DIG2 binds to the DNA binding domain (DBD) of STE12 and thus inhibits transcription when overexpressed. The chain is Down-regulator of invasive growth 2 (DIG2) from Saccharomyces cerevisiae (strain ATCC 204508 / S288c) (Baker's yeast).